A 379-amino-acid polypeptide reads, in one-letter code: Cytochrome b (379 aa).

4 helical membrane-spanning segments follow: residues 33–53, 77–98, 113–133, and 178–198; these read FGSL…FLAM, WTIR…FIHV, WNVG…GYVL, and FFAL…IHLL. 2 residues coordinate heme b: His83 and His97. Heme b contacts are provided by His182 and His196. An a ubiquinone-binding site is contributed by His201. A run of 4 helical transmembrane segments spans residues 226–246, 288–308, 320–340, and 347–367; these read TKDF…ALFY, LGGV…PFLQ, LSQF…WIGG, and FINI…FIMP.

Belongs to the cytochrome b family. The cytochrome bc1 complex contains 11 subunits: 3 respiratory subunits (MT-CYB, CYC1 and UQCRFS1), 2 core proteins (UQCRC1 and UQCRC2) and 6 low-molecular weight proteins (UQCRH/QCR6, UQCRB/QCR7, UQCRQ/QCR8, UQCR10/QCR9, UQCR11/QCR10 and a cleavage product of UQCRFS1). This cytochrome bc1 complex then forms a dimer. Requires heme b as cofactor.

It localises to the mitochondrion inner membrane. Component of the ubiquinol-cytochrome c reductase complex (complex III or cytochrome b-c1 complex) that is part of the mitochondrial respiratory chain. The b-c1 complex mediates electron transfer from ubiquinol to cytochrome c. Contributes to the generation of a proton gradient across the mitochondrial membrane that is then used for ATP synthesis. The sequence is that of Cytochrome b (MT-CYB) from Lepilemur sahamalazensis (Sahamalaza sportive lemur).